We begin with the raw amino-acid sequence, 188 residues long: Ion-translocating oxidoreductase complex subunit B (188 aa).

Residues 1–26 are hydrophobic; the sequence is MNGVLLAIGVLLPICLASGALLGYAA. A 4Fe-4S domain is found at 32–90; it reads QGDPVAERVNALLPQTQCGQCGYPGCKPYAEAIAAGDRINKCPPGGEATIQALADLLDL. Residues C49, C52, C57, C73, C113, C116, C119, C123, C143, C146, C149, and C153 each coordinate [4Fe-4S] cluster. 4Fe-4S ferredoxin-type domains are found at residues 104-133 and 134-163; these read RVAYIREAECIGCTKCIQACPVDAIVGAAR and LMHTVIADECTGCDLCLEPCPVDCIEMREI.

The protein belongs to the 4Fe4S bacterial-type ferredoxin family. RnfB subfamily. As to quaternary structure, the complex is composed of six subunits: RnfA, RnfB, RnfC, RnfD, RnfE and RnfG. [4Fe-4S] cluster is required as a cofactor.

It localises to the cell inner membrane. Its function is as follows. Part of a membrane-bound complex that couples electron transfer with translocation of ions across the membrane. This chain is Ion-translocating oxidoreductase complex subunit B, found in Pseudomonas paraeruginosa (strain DSM 24068 / PA7) (Pseudomonas aeruginosa (strain PA7)).